The sequence spans 385 residues: MTVSNKTQTALVGSPDGAIILSDTAPLPPSQLEDEQVAVAVQAVSLNPVDTKMAGDYHTPGAISGCEFAGVVTAVGPGAASEWGLGPGDRVSAAIMGMNPLRPSIGAFAQHSVAPAHCLLKMRDDWGFAQAAGLGNSWYTVAWALFHVMGLPAGPELEPLHTKHPPPAREPRISIDNPAPNGGGGKRTTVLVSGGSSSTGTCAIQLLKLAGFDVVATSSARNFDLVRSYGADAVFDHSSPSVAADIKAHTRNGLRLALDCITTPDTTRLCYGAIGRTGGRYVSLDPYSEVVAASRAVVRADWVLGPELMGEDVGWPAPHGRKGNPEAKAFCKVWNRTLQGLLDRGAIRTHPQRVRDTGLRGVLEGLDDIREKRVSGEKLVYTLQV.

Position 49–52 (49–52) interacts with NADP(+); the sequence is VDTK. Residue 136–143 coordinates substrate; it reads NSWYTVAW. Residues 196-199, 219-222, and 284-285 each bind NADP(+); these read SSST, SARN, and LD. 305–309 contributes to the substrate binding site; sequence GPELM. 374-375 serves as a coordination point for NADP(+); that stretch reads VS.

This sequence belongs to the zinc-containing alcohol dehydrogenase family. Monomer.

The catalysed reaction is (2S,4S)-4-hydroxy-4-methylglutamate + 8 malonyl-CoA + 3 S-adenosyl-L-methionine + ATP + 8 NADPH + 11 H(+) = (2S)-3-[(2S)-3,5-dioxo-4-[(2E,4R,6R,8E,10E,12E)-4,6,12-trimethyltetradeca-2,8,10,12-tetraenoyl]pyrrolidin-2-yl]-2-hydroxy-2-methylpropanoate + AMP + 3 S-adenosyl-L-homocysteine + 8 CO2 + diphosphate + 8 NADP(+) + 8 CoA + 6 H2O. It catalyses the reaction (2S,4R)-4-hydroxy-4-methylglutamate + 8 malonyl-CoA + 3 S-adenosyl-L-methionine + ATP + 8 NADPH + 11 H(+) = (2R)-3-[(2S)-3,5-dioxo-4-[(2E,4R,6R,8E,10E,12E)-4,6,12-trimethyltetradeca-2,8,10,12-tetraenoyl]pyrrolidin-2-yl]-2-hydroxy-2-methylpropanoate + AMP + 3 S-adenosyl-L-homocysteine + 8 CO2 + diphosphate + 8 NADP(+) + 8 CoA + 6 H2O. The protein operates within secondary metabolite biosynthesis. In terms of biological role, trans-enoyl reductase; part of the gene cluster that mediates the biosynthesis of the tetramic acids Sch210971 and Sch210972, potential anti-HIV fungal natural product that contain a decalin core. The PKS module of tasS together with the enoylreductase tasC catalyze the formation of the polyketide unit which is then conjugated to 4-hydroxyl-4-methyl glutamate (HMG) by the condensation domain of the tasS NRPS module. One unique structural feature of Sch210971 and Sch210972 is the tetramic acid motif proposed to be derived from the non-proteinogenic amino acid HMG, by a Dieckmann-type condensation catalyzed by the reductase domain of tasS. The aldolase tasA catalyzes the aldol condensation of 2 molecules of pyruvic acid to yield the intermediate 4-hydroxyl-4-methyl-2-oxoglutarate (HMOG), which can then be stereoselectively transaminated, may be by tasG, to form HMG. The Diels-Alderase tas3 then uses the Dieckmann product of tasS as substrate and catalyzes the Diels-Alder cycloaddition to form the decalin ring of Sch210971 and Sch210972. The chain is Trans-enoyl reductase tasC from Hapsidospora irregularis.